Consider the following 535-residue polypeptide: Probable lipid II flippase MurJ (535 aa).

12 helical membrane-spanning segments follow: residues 90–110 (VLFT…PFIV), 131–151 (FATI…MAGM), 159–179 (FAAA…LAYA), 192–212 (DLSW…WVAV), 233–253 (LLVL…NLLI), 274–294 (IYQL…LPEL), 316–336 (FTLF…EPIV), 350–370 (TVVV…FVLI), 388–408 (IFAG…FPSL), 413–433 (IATA…ATLV), 451–471 (LVIA…WLAF), and 484–504 (LTLC…AFGI).

The protein belongs to the MurJ/MviN family.

Its subcellular location is the cell inner membrane. The protein operates within cell wall biogenesis; peptidoglycan biosynthesis. Involved in peptidoglycan biosynthesis. Transports lipid-linked peptidoglycan precursors from the inner to the outer leaflet of the cytoplasmic membrane. This chain is Probable lipid II flippase MurJ, found in Rhizobium meliloti (strain 1021) (Ensifer meliloti).